A 78-amino-acid polypeptide reads, in one-letter code: Conotoxin 1 (78 aa).

The signal sequence occupies residues 1–22 (MKLTCMMFVAVLFLTASVFITA). Positions 23–51 (DDSRNGIENLPRMRRHEMKNPKASKLNKR) are excised as a propeptide. Pyrrolidone carboxylic acid is present on Gln52. Cystine bridges form between Cys53–Cys69, Cys60–Cys73, and Cys68–Cys77.

The protein belongs to the conotoxin O1 superfamily. As to expression, expressed by the venom duct.

It localises to the secreted. The protein is Conotoxin 1 of Conus imperialis (Imperial cone).